The following is a 670-amino-acid chain: Neutral ceramidase (670 aa).

The N-terminal stretch at 1–24 (MSRSAFTALLLSCVLLALSMPARA) is a signal peptide. His-61 is a Mg(2+) binding site. Residues Asn-84, Gln-92, and Asp-111 each coordinate substrate. His-121 is a binding site for Zn(2+). Ser-130 contacts substrate. Zn(2+) is bound at residue His-228. The active-site Nucleophile is the Ser-274. An intrachain disulfide couples Cys-346 to Cys-394. A Zn(2+)-binding site is contributed by Glu-435. Substrate is bound at residue Tyr-469. Tyr-472 provides a ligand contact to Zn(2+). Residues Asp-603, Asp-605, and Thr-608 each contribute to the Mg(2+) site. Residues 644 to 670 (NAKNFWTQKISEIGGSTRSFEVLGTTP) are required for correct folding and localization.

It belongs to the neutral ceramidase family. In terms of assembly, homodimer. Zn(2+) is required as a cofactor. It depends on Mg(2+) as a cofactor.

The protein resides in the secreted. The enzyme catalyses an N-acylsphing-4-enine + H2O = sphing-4-enine + a fatty acid. Its activity is regulated as follows. Inhibited by EDTA, EGTA and D/L-sphinganine D-erythro-sphingosine. L-erythro-sphingosine is a less powerful inhibitor. Stimulated by glycerophospholipids: cardiolipin is the most effective, followed by phosphatidic acid, phosphatidylethanolamine and phosphatidylglycerol, whereas phosphatidylcholine, lysophosphatidic acid and diacylglycerol are less effective. Functionally, catalyzes the cleavage of the N-acyl linkage of the ceramides (Cers) to yield sphingosine (Sph) and free fatty acid at an optimal pH of 8-9. Also catalyzes the synthesis of Cers from Sph and fatty acid. The protein is Neutral ceramidase of Pseudomonas aeruginosa (strain ATCC 15692 / DSM 22644 / CIP 104116 / JCM 14847 / LMG 12228 / 1C / PRS 101 / PAO1).